A 472-amino-acid polypeptide reads, in one-letter code: Probable serine/threonine-protein kinase At1g01540 (472 aa).

Residues 24-44 (LWVVIGILLGSLIVIALFLLS) traverse the membrane as a helical segment. Phosphothreonine occurs at positions 67 and 143. The region spanning 154–431 (LCEENVIGEG…IHMLEAEDLL (278 aa)) is the Protein kinase domain. ATP is bound by residues 160-168 (IGEGGYGIV) and K182. Position 227 is a phosphotyrosine (Y227). D280 functions as the Proton acceptor in the catalytic mechanism. Position 284 is a phosphoserine (S284). A phosphothreonine mark is found at T314 and T319. Y327 is subject to Phosphotyrosine. The span at 437 to 449 (RTTRDHGSRERQE) shows a compositional bias: basic and acidic residues. Residues 437–472 (RTTRDHGSRERQETAVVAAGSESGESGSRHHQQKQR) form a disordered region. Low complexity predominate over residues 451–462 (AVVAAGSESGES).

Belongs to the protein kinase superfamily. Ser/Thr protein kinase family.

The protein localises to the membrane. The enzyme catalyses L-seryl-[protein] + ATP = O-phospho-L-seryl-[protein] + ADP + H(+). It catalyses the reaction L-threonyl-[protein] + ATP = O-phospho-L-threonyl-[protein] + ADP + H(+). In Arabidopsis thaliana (Mouse-ear cress), this protein is Probable serine/threonine-protein kinase At1g01540.